The sequence spans 2555 residues: Neurogenic locus notch homolog protein 1 (2555 aa).

The first 18 residues, methionine 1–alanine 18, serve as a signal peptide directing secretion. Topologically, residues alanine 19 to histidine 1735 are extracellular. EGF-like domains are found at residues arginine 20–glutamine 58, aspartate 59–leucine 99, leucine 102–glutamine 139, and glutamine 140–arginine 176. 33 disulfide bridges follow: cysteine 24/cysteine 37, cysteine 31/cysteine 46, cysteine 48/cysteine 57, cysteine 63/cysteine 74, cysteine 68/cysteine 87, cysteine 89/cysteine 98, cysteine 106/cysteine 117, cysteine 111/cysteine 127, cysteine 129/cysteine 138, cysteine 144/cysteine 155, cysteine 149/cysteine 164, cysteine 166/cysteine 175, cysteine 182/cysteine 195, cysteine 189/cysteine 204, cysteine 206/cysteine 215, cysteine 222/cysteine 233, cysteine 227/cysteine 243, cysteine 245/cysteine 254, cysteine 261/cysteine 272, cysteine 266/cysteine 281, cysteine 283/cysteine 292, cysteine 299/cysteine 312, cysteine 306/cysteine 321, cysteine 323/cysteine 332, cysteine 339/cysteine 350, cysteine 344/cysteine 359, cysteine 361/cysteine 370, cysteine 376/cysteine 387, cysteine 381/cysteine 398, cysteine 400/cysteine 409, cysteine 416/cysteine 429, cysteine 423/cysteine 438, and cysteine 440/cysteine 449. Asparagine 41 carries an N-linked (GlcNAc...) asparagine glycan. O-linked (Glc...) serine glycosylation is present at serine 65. Residue threonine 73 is glycosylated (O-linked (Fuc...) threonine). Residue threonine 116 is glycosylated (O-linked (Fuc...) threonine). Serine 146 is a glycosylation site (O-linked (Glc...) serine). An EGF-like 5; calcium-binding domain is found at aspartate 178–glutamate 216. O-linked (Fuc...) threonine glycosylation is present at threonine 194. Residues proline 218–glutamate 255 enclose the EGF-like 6 domain. O-linked (Fuc...) threonine; alternate glycosylation is present at threonine 232. Residue threonine 232 is glycosylated (O-linked (GalNAc...) threonine; alternate). Positions asparagine 257 to threonine 293 constitute an EGF-like 7; calcium-binding domain. The EGF-like 8; calcium-binding domain maps to aspartate 295 to serine 333. O-linked (Fuc...) threonine glycosylation is present at threonine 311. Residues asparagine 335 to histidine 371 form the EGF-like 9; calcium-binding domain. Serine 341 carries an O-linked (Glc...) serine glycan. Residue threonine 349 is glycosylated (O-linked (Fuc...) threonine). The 39-residue stretch at leucine 372–serine 410 folds into the EGF-like 10 domain. Residue serine 378 is glycosylated (O-linked (Glc...) serine). Residues aspartate 412–glutamate 450 enclose the EGF-like 11; calcium-binding domain. The interaction with DLL4 stretch occupies residues alanine 420 to asparagine 421. 2 residues coordinate Ca(2+): threonine 432 and serine 435. Residue serine 435 is glycosylated (O-linked (Glc...) serine). Residues arginine 448–aspartate 452 are interaction with DLL4. Residues aspartate 452, valine 453, and glutamate 455 each contribute to the Ca(2+) site. In terms of domain architecture, EGF-like 12; calcium-binding spans aspartate 452 to glutamate 488. 3 cysteine pairs are disulfide-bonded: cysteine 456/cysteine 467, cysteine 461/cysteine 476, and cysteine 478/cysteine 487. Serine 458 is a glycosylation site (O-linked (Glc...) serine). O-linked (Fuc...) threonine glycosylation occurs at threonine 466. Residues aspartate 469 and glutamine 470 each contribute to the Ca(2+) site. The Ca(2+) site is built by asparagine 490, threonine 491, and glutamate 493. One can recognise an EGF-like 13; calcium-binding domain in the interval asparagine 490–glutamine 526. 74 disulfides stabilise this stretch: cysteine 494–cysteine 505, cysteine 499–cysteine 514, cysteine 516–cysteine 525, cysteine 532–cysteine 543, cysteine 537–cysteine 552, cysteine 554–cysteine 563, cysteine 570–cysteine 580, cysteine 575–cysteine 589, cysteine 591–cysteine 600, cysteine 607–cysteine 618, cysteine 612–cysteine 627, cysteine 629–cysteine 638, cysteine 645–cysteine 655, cysteine 650–cysteine 664, cysteine 666–cysteine 675, cysteine 682–cysteine 693, cysteine 687–cysteine 702, cysteine 704–cysteine 713, cysteine 720–cysteine 730, cysteine 725–cysteine 739, cysteine 741–cysteine 750, cysteine 757–cysteine 768, cysteine 762–cysteine 777, cysteine 779–cysteine 788, cysteine 795–cysteine 806, cysteine 800–cysteine 815, cysteine 817–cysteine 826, cysteine 833–cysteine 844, cysteine 838–cysteine 855, cysteine 857–cysteine 866, cysteine 873–cysteine 884, cysteine 878–cysteine 893, cysteine 895–cysteine 904, cysteine 911–cysteine 922, cysteine 916–cysteine 931, cysteine 933–cysteine 942, cysteine 949–cysteine 960, cysteine 954–cysteine 969, cysteine 971–cysteine 980, cysteine 987–cysteine 998, cysteine 992–cysteine 1007, cysteine 1009–cysteine 1018, cysteine 1025–cysteine 1036, cysteine 1030–cysteine 1045, cysteine 1047–cysteine 1056, cysteine 1063–cysteine 1074, cysteine 1068–cysteine 1083, cysteine 1085–cysteine 1094, cysteine 1101–cysteine 1122, cysteine 1116–cysteine 1131, cysteine 1133–cysteine 1142, cysteine 1149–cysteine 1160, cysteine 1154–cysteine 1169, cysteine 1171–cysteine 1180, cysteine 1187–cysteine 1198, cysteine 1192–cysteine 1207, cysteine 1209–cysteine 1218, cysteine 1238–cysteine 1253, cysteine 1255–cysteine 1264, cysteine 1271–cysteine 1284, cysteine 1276–cysteine 1293, cysteine 1295–cysteine 1304, cysteine 1311–cysteine 1322, cysteine 1316–cysteine 1334, cysteine 1336–cysteine 1345, cysteine 1352–cysteine 1363, cysteine 1357–cysteine 1372, cysteine 1374–cysteine 1383, cysteine 1391–cysteine 1403, cysteine 1397–cysteine 1414, cysteine 1416–cysteine 1425, cysteine 1449–cysteine 1472, cysteine 1454–cysteine 1467, and cysteine 1463–cysteine 1479. O-linked (Glc...) serine glycosylation occurs at serine 496. Residues aspartate 507 and lysine 508 each contribute to the Ca(2+) site. The region spanning aspartate 528 to glutamate 564 is the EGF-like 14; calcium-binding domain. O-linked (Glc...) serine glycosylation occurs at serine 534. One can recognise an EGF-like 15; calcium-binding domain in the interval aspartate 566 to glutamate 601. The EGF-like 16; calcium-binding domain occupies asparagine 603–glutamate 639. The O-linked (Glc...) serine glycan is linked to serine 609. An O-linked (Fuc...) threonine glycan is attached at threonine 617. An EGF-like 17; calcium-binding domain is found at asparagine 641 to asparagine 676. Serine 647 carries an O-linked (Glc...) serine glycan. Residues asparagine 678–leucine 714 form the EGF-like 18; calcium-binding domain. O-linked (Fuc...) threonine glycosylation is present at threonine 692. The EGF-like 19; calcium-binding domain maps to glutamate 716–aspartate 751. An O-linked (Glc...) serine glycan is attached at serine 722. One can recognise an EGF-like 20 domain in the interval asparagine 753–glutamine 789. O-linked (Glc...) serine glycosylation occurs at serine 759. Threonine 767 carries an O-linked (Fuc...) threonine glycan. Residue serine 784 is glycosylated (O-linked (GlcNAc) serine). An EGF-like 21; calcium-binding domain is found at asparagine 791 to glutamate 827. Serine 797 carries O-linked (Glc...) serine glycosylation. An O-linked (Fuc...) threonine glycan is attached at threonine 805. The 39-residue stretch at valine 829–glutamate 867 folds into the EGF-like 22 domain. An EGF-like 23; calcium-binding domain is found at aspartate 869–glutamate 905. The EGF-like 24 domain maps to aspartate 907–glutamate 943. Serine 921 is a glycosylation site (O-linked (Fuc) serine). Residues aspartate 945–glutamate 981 form the EGF-like 25; calcium-binding domain. An O-linked (Glc...) serine glycan is attached at serine 951. Asparagine 959 carries an N-linked (GlcNAc...) asparagine glycan. EGF-like domains are found at residues asparagine 983–glutamine 1019, aspartate 1021–glutamine 1057, leucine 1059–aspartate 1095, proline 1097–glutamate 1143, and leucine 1145–serine 1181. Residue threonine 997 is glycosylated (O-linked (Fuc...) threonine). O-linked (Glc...) serine glycosylation occurs at serine 1027. Threonine 1035 carries an O-linked (Fuc...) threonine glycan. An O-linked (Glc...) serine glycan is attached at serine 1065. A glycan (O-linked (Fuc...) threonine) is linked at threonine 1159. Asparagine 1179 carries an N-linked (GlcNAc...) asparagine glycan. An EGF-like 31; calcium-binding domain is found at glutamate 1183–glutamate 1219. O-linked (Glc...) serine glycosylation is present at serine 1189. Threonine 1197 carries an O-linked (Fuc...) threonine glycan. An EGF-like 32; calcium-binding domain is found at asparagine 1221–glutamate 1265. A glycan (N-linked (GlcNAc...) asparagine) is linked at asparagine 1241. 4 consecutive EGF-like domains span residues aspartate 1267–glutamate 1305, valine 1307–glutamate 1346, aspartate 1348–glutamine 1384, and alanine 1387–histidine 1426. O-linked (Glc...) serine glycosylation occurs at serine 1273. O-linked (Fuc...) threonine glycosylation is present at threonine 1362. O-linked (GlcNAc...) threonine glycosylation is present at threonine 1379. Residue threonine 1402 is glycosylated (O-linked (Fuc...) threonine; alternate). Residue threonine 1402 is glycosylated (O-linked (GalNAc...) threonine; alternate). LNR repeat units lie at residues cysteine 1449 to asparagine 1489, cysteine 1490 to leucine 1531, and tyrosine 1532 to alanine 1571. Aspartate 1457, asparagine 1460, aspartate 1475, and aspartate 1478 together coordinate Ca(2+). The N-linked (GlcNAc...) asparagine glycan is linked to asparagine 1489. 5 disulfides stabilise this stretch: cysteine 1490-cysteine 1514, cysteine 1496-cysteine 1509, cysteine 1505-cysteine 1521, cysteine 1536-cysteine 1549, and cysteine 1545-cysteine 1561. The N-linked (GlcNAc...) asparagine glycan is linked to asparagine 1587. O-linked (GalNAc...) threonine glycosylation is present at threonine 1725. An interaction with PSEN1 region spans residues proline 1728–arginine 1760. The helical transmembrane segment at phenylalanine 1736–leucine 1756 threads the bilayer. Residues serine 1757–lysine 2555 lie on the Cytoplasmic side of the membrane. A Glycyl lysine isopeptide (Lys-Gly) (interchain with G-Cter in ubiquitin) cross-link involves residue lysine 1759. Residues lysine 1780–aspartate 1808 form a disordered region. Threonine 1861 bears the Phosphothreonine mark. ANK repeat units follow at residues threonine 1927–isoleucine 1956, methionine 1960–alanine 1990, aspartate 1994–alanine 2023, leucine 2027–methionine 2056, arginine 2060–isoleucine 2089, and arginine 2095–proline 2122. The segment at leucine 1947–asparagine 1955 is HIF1AN-binding. A (3S)-3-hydroxyasparagine; by HIF1AN; partial modification is found at asparagine 1955. Positions leucine 2014–asparagine 2022 are HIF1AN-binding. A (3S)-3-hydroxyasparagine; by HIF1AN modification is found at asparagine 2022. Disordered regions lie at residues proline 2151–serine 2194, leucine 2379–glycine 2447, and threonine 2483–lysine 2555. Over residues leucine 2379–leucine 2408 the composition is skewed to low complexity. Residues threonine 2483–leucine 2502 are compositionally biased toward polar residues. Residues proline 2512–serine 2527 are compositionally biased toward low complexity. The segment covering asparagine 2528–isoleucine 2547 has biased composition (polar residues).

This sequence belongs to the NOTCH family. In terms of assembly, heterodimer of a C-terminal fragment N(TM) and an N-terminal fragment N(EC) which are probably linked by disulfide bonds. Interacts with DNER, DTX1, DTX2 and RBPJ/RBPSUH. Also interacts with MAML1, MAML2 and MAML3 which act as transcriptional coactivators for NOTCH1. The NOTCH1 intracellular domain interacts with SNW1; the interaction involves multimerized NOTCH1 NICD and is implicated in a formation of an intermediate preactivation complex which associates with DNA-bound CBF-1/RBPJ. The activated membrane-bound form interacts with AAK1 which promotes NOTCH1 stabilization. Forms a trimeric complex with FBXW7 and SGK1. Interacts with HIF1AN. HIF1AN negatively regulates the function of notch intracellular domain (NICD), accelerating myogenic differentiation. Interacts (via NICD) with SNAI1 (via zinc fingers); the interaction induces SNAI1 degradation via MDM2-mediated ubiquitination and inhibits SNAI1-induced cell invasion. Interacts (via NICD) with MDM2A. Interacts (via NICD) with BCL6; the interaction decreases MAML1 recruitment by NOTCH1 NICD on target genes DNA and inhibits NOTCH1 transactivation activity. Interacts with THBS4. Interacts (via the EGF-like repeat region) with CCN3 (via CTCK domain). Interacts (via EGF-like domains) with DLL4 (via N-terminal DSL and MNNL domains). Interacts with ZMIZ1. Interacts (via NICD domain) with MEGF10 (via the cytoplasmic domain). Interacts with DLL1 and JAG1. Interacts (via NICD domain) with PRAG1. Forms a complex with PRAG1, N1ICD and MAML1, in a MAML1-dependent manner. Interacts (via transmembrane region) with PSEN1; the interaction is direct. Interacts with ZFP64. Synthesized in the endoplasmic reticulum as an inactive form which is proteolytically cleaved by a furin-like convertase in the trans-Golgi network before it reaches the plasma membrane to yield an active, ligand-accessible form. Cleavage results in a C-terminal fragment N(TM) and a N-terminal fragment N(EC). Following ligand binding, it is cleaved by ADAM17 to yield a membrane-associated intermediate fragment called notch extracellular truncation (NEXT). Following endocytosis, this fragment is then cleaved by one of the catalytic subunits of gamma-secretase (PSEN1 or PSEN2), to release a Notch-derived peptide containing the intracellular domain (NICD) from the membrane. Post-translationally, phosphorylated. In terms of processing, O-glycosylated on the EGF-like domains. O-glucosylated at Ser-435 by KDELC1 and KDELC2. Contains both O-linked fucose and O-linked glucose in the EGF-like domains 11, 12 and 13, which are interacting with the residues on DLL4. O-linked glycosylation by GALNT11 is involved in determination of left/right symmetry: glycosylation promotes activation of NOTCH1, possibly by promoting cleavage by ADAM17, modulating the balance between motile and immotile (sensory) cilia at the left-right organiser (LRO). MFNG-, RFNG- and LFNG-mediated modification of O-fucose residues at specific EGF-like domains results in inhibition of its activation by JAG1 and enhancement of its activation by DLL1 via an increased binding to DLL1. Ubiquitinated. Undergoes 'Lys-29'-linked polyubiquitination by ITCH; promotes the lysosomal degradation of non-activated internalized NOTCH1. Deubiquitination by USP12 is required for transport of internalized non-activated receptor from late endosomes to lysosomes for degradation. Monoubiquitination at Lys-1759 is required for activation by gamma-secretase cleavage, it promotes interaction with AAK1, which stabilizes it. Deubiquitination by EIF3F is necessary for nuclear import of activated Notch. Post-translationally, hydroxylated at Asn-1955 by HIF1AN. Hydroxylated at Asn-2022 by HIF1AN. Hydroxylation reduces affinity for HI1AN and may thus indirectly modulate negative regulation of NICD. In terms of tissue distribution, in fetal tissues most abundant in spleen, brain stem and lung. Also present in most adult tissues where it is found mainly in lymphoid tissues.

The protein localises to the cell membrane. The protein resides in the late endosome membrane. It is found in the nucleus. Functionally, functions as a receptor for membrane-bound ligands Jagged-1 (JAG1), Jagged-2 (JAG2) and Delta-1 (DLL1) to regulate cell-fate determination. Upon ligand activation through the released notch intracellular domain (NICD) it forms a transcriptional activator complex with RBPJ/RBPSUH and activates genes of the enhancer of split locus. Affects the implementation of differentiation, proliferation and apoptotic programs. Involved in angiogenesis; negatively regulates endothelial cell proliferation and migration and angiogenic sprouting. Involved in the maturation of both CD4(+) and CD8(+) cells in the thymus. Important for follicular differentiation and possibly cell fate selection within the follicle. During cerebellar development, functions as a receptor for neuronal DNER and is involved in the differentiation of Bergmann glia. Represses neuronal and myogenic differentiation. May play an essential role in postimplantation development, probably in some aspect of cell specification and/or differentiation. May be involved in mesoderm development, somite formation and neurogenesis. May enhance HIF1A function by sequestering HIF1AN away from HIF1A. Required for the THBS4 function in regulating protective astrogenesis from the subventricular zone (SVZ) niche after injury. Involved in determination of left/right symmetry by modulating the balance between motile and immotile (sensory) cilia at the left-right organiser (LRO). In Homo sapiens (Human), this protein is Neurogenic locus notch homolog protein 1 (NOTCH1).